A 1605-amino-acid chain; its full sequence is Ribosome-binding protein 1 (1605 aa).

The Lumenal portion of the chain corresponds to 1–7 (MDIYDTQ). Residues 8–28 (TLGVVVFGGFMVVSAIGIFLV) traverse the membrane as a helical segment. The Cytoplasmic portion of the chain corresponds to 29-1605 (STFSMKETSY…GSSSKEGTSV (1577 aa)). The tract at residues 44 to 88 (NQRKEMAKTHHQKGEKKKKEKTVEKKGKTKKKEEKPNGKIPEHDL) is disordered. Basic residues predominate over residues 52–63 (THHQKGEKKKKE). A compositionally biased stretch (basic and acidic residues) spans 64 to 88 (KTVEKKGKTKKKEEKPNGKIPEHDL). Ser-111 carries the phosphoserine modification. Positions 114-150 (SSVGHTPIATVPAMPQEKLASSPKDRKKKEKKVAKVE) are disordered. A Glycyl lysine isopeptide (Lys-Gly) (interchain with G-Cter in SUMO2) cross-link involves residue Lys-148. Phosphoserine occurs at positions 159 and 165. A disordered region spans residues 172–849 (ATPKEVPMVA…PGPPDCDGPL (678 aa)). Repeat copies occupy residues 196-205 (SQGKKGQGAQ), 206-215 (NQAKKGEGAQ), 216-225 (NQGKKGEGAQ), 226-235 (NQAKKGEGAQ), 236-245 (NQAKKGEGAQ), 246-255 (NQGKKGEGAQ), 256-265 (NQAKKGEGGQ), 266-275 (NQAKKGEGAQ), 276-285 (NQGKKGEGAQ), 286-295 (NQGKKGEGAQ), 296-305 (NQAKKGEGAQ), 306-315 (NQAKKGEGAQ), 316-325 (NQGKKGEGAQ), 326-335 (NQSKKGEGAQ), 336-345 (NQAKKGEGGQ), 346-355 (NQAKKGEGAQ), 356-365 (NQAKKGEGAQ), 366-375 (NQAKKGEGVQ), 376-385 (NQAKKGVEGA), 386-395 (QNQGKKGEAN), 396-405 (QNQAKKGEGG), 406-415 (QNQTKKGEGP), 416-425 (QNQGKKGEAA), 426-435 (QKQDKKIEGA), 436-445 (QNQGKKPEGT), 446-455 (SNQGKKGEGA), 456-465 (QNQGKKGEGA), 466-475 (QNQSKKGEGA), 476-485 (QNQAKKGEGG), 486-495 (QNQAKKGEGA), 496-505 (QNQAKKGEGA), 506-515 (QNQAKKGEGV), 516-525 (QNQAKKGVEG), 527-536 (QNQGKKGEAN), 537-546 (QNQAKKGEGG), 547-556 (QNQTKKGEGP), 557-566 (QNQGKKGEAA), 567-576 (QKQDKKIEGA), 577-586 (QNQGKKPEGT), 587-596 (SNQGKKGEGA), 597-606 (QNQGKKGEGA), 607-616 (QNQGKKGEGA), 617-626 (QNQGKKGEGA), 628-637 (NQGKKGEGAQ), 638-647 (NQGKKGEGAQ), 648-657 (NQGKKGEGAQ), 658-667 (NQGKKGEGPQ), 668-677 (NQAKKGEGAQ), 678-687 (NQGKKGEGAQ), 688-697 (NQGKKGEGAQ), 698-707 (NQGKKAEGVQ), 708-717 (SQSKKGEGTQ), 718-727 (NQGKKGDGNP), 729-738 (QGKKGEGASN), 739-748 (QNRKTDTVAN), 749-758 (QGTKQEGVSN), 759-768 (QVKKSEGSPN), 769-778 (QGKKAEGAPN), 779-788 (QGKKKDGSPS), 789-798 (QAKKVDAAAN), and 799-808 (QGKKSEMAPA). Residues 196–808 (SQGKKGQGAQ…QGKKSEMAPA (613 aa)) form a 61 X 10 AA tandem repeats of [NSQ]-[NKQVGA]-[GSAQKRT]-[ASGDTK]-[KGTQSAV]-[KGAED]-[EQVGIPTDMA]-[EGVAS]-[AGVPETNS]-[AQNGPTVS] region. Residues 197–208 (QGKKGQGAQNQA) show a composition bias toward low complexity. 4 stretches are compositionally biased toward polar residues: residues 224–258 (AQNQAKKGEGAQNQAKKGEGAQNQGKKGEGAQNQA), 274–338 (AQNQ…QNQA), 354–378 (AQNQAKKGEGAQNQAKKGEGVQNQA), and 385–399 (AQNQGKKGEANQNQA). Over residues 420–433 (KKGEAAQKQDKKIE) the composition is skewed to basic and acidic residues. 3 stretches are compositionally biased toward polar residues: residues 435–479 (AQNQ…QNQA), 495–519 (AQNQAKKGEGAQNQAKKGEGVQNQA), and 526–540 (AQNQGKKGEANQNQA). Residues 561 to 574 (KKGEAAQKQDKKIE) are compositionally biased toward basic and acidic residues. Composition is skewed to polar residues over residues 576–720 (AQNQ…QNQG) and 736–769 (ASNQNRKTDTVANQGTKQEGVSNQVKKSEGSPNQ). Residue Ser-786 is modified to Phosphoserine. Over residues 811-821 (QKASMVQSQEA) the composition is skewed to polar residues. Position 818 is a phosphoserine (Ser-818). Residue Lys-823 forms a Glycyl lysine isopeptide (Lys-Gly) (interchain with G-Cter in SUMO1) linkage. At Lys-1135 the chain carries N6-acetyllysine. Phosphoserine occurs at positions 1162 and 1178. 2 disordered regions span residues 1460 to 1481 (MRSHVEDGDVAGSPAVPPAEQD) and 1571 to 1605 (TTQEQLTKEKDTVKKLQEQLGKAEDGSSSKEGTSV). Basic and acidic residues predominate over residues 1576–1598 (LTKEKDTVKKLQEQLGKAEDGSS).

As to expression, widely expressed.

Its subcellular location is the endoplasmic reticulum membrane. In terms of biological role, acts as a ribosome receptor and mediates interaction between the ribosome and the endoplasmic reticulum membrane. The chain is Ribosome-binding protein 1 (Rrbp1) from Mus musculus (Mouse).